The following is a 334-amino-acid chain: Lipoyl synthase (334 aa).

Residues 1 to 36 are disordered; the sequence is MSDALIAPNASSSEAPQSPAEHYDPTRKQKSADKTA. Over residues 7–20 the composition is skewed to low complexity; that stretch reads APNASSSEAPQSPA. The segment covering 21 to 36 has biased composition (basic and acidic residues); the sequence is EHYDPTRKQKSADKTA. Residues cysteine 81, cysteine 86, cysteine 92, cysteine 107, cysteine 111, cysteine 114, and serine 321 each coordinate [4Fe-4S] cluster. The Radical SAM core domain occupies 92 to 310; the sequence is CFGKGTATFM…EEEAYKMGFT (219 aa).

Belongs to the radical SAM superfamily. Lipoyl synthase family. Requires [4Fe-4S] cluster as cofactor.

It is found in the cytoplasm. The catalysed reaction is [[Fe-S] cluster scaffold protein carrying a second [4Fe-4S](2+) cluster] + N(6)-octanoyl-L-lysyl-[protein] + 2 oxidized [2Fe-2S]-[ferredoxin] + 2 S-adenosyl-L-methionine + 4 H(+) = [[Fe-S] cluster scaffold protein] + N(6)-[(R)-dihydrolipoyl]-L-lysyl-[protein] + 4 Fe(3+) + 2 hydrogen sulfide + 2 5'-deoxyadenosine + 2 L-methionine + 2 reduced [2Fe-2S]-[ferredoxin]. Its pathway is protein modification; protein lipoylation via endogenous pathway; protein N(6)-(lipoyl)lysine from octanoyl-[acyl-carrier-protein]: step 2/2. Catalyzes the radical-mediated insertion of two sulfur atoms into the C-6 and C-8 positions of the octanoyl moiety bound to the lipoyl domains of lipoate-dependent enzymes, thereby converting the octanoylated domains into lipoylated derivatives. The sequence is that of Lipoyl synthase from Cupriavidus taiwanensis (strain DSM 17343 / BCRC 17206 / CCUG 44338 / CIP 107171 / LMG 19424 / R1) (Ralstonia taiwanensis (strain LMG 19424)).